We begin with the raw amino-acid sequence, 90 residues long: ATP-dependent Clp protease adapter protein ClpS (90 aa).

This sequence belongs to the ClpS family. Binds to the N-terminal domain of the chaperone ClpA.

In terms of biological role, involved in the modulation of the specificity of the ClpAP-mediated ATP-dependent protein degradation. The protein is ATP-dependent Clp protease adapter protein ClpS of Helicobacter pylori (strain J99 / ATCC 700824) (Campylobacter pylori J99).